The following is a 279-amino-acid chain: Octanoyl-[GcvH]:protein N-octanoyltransferase (279 aa).

The BPL/LPL catalytic domain maps to 48–253; the sequence is ETSPPVIRLW…TLEKLSDEIV (206 aa). Catalysis depends on cysteine 152, which acts as the Acyl-thioester intermediate.

It belongs to the octanoyltransferase LipL family.

The catalysed reaction is N(6)-octanoyl-L-lysyl-[glycine-cleavage complex H protein] + L-lysyl-[lipoyl-carrier protein] = N(6)-octanoyl-L-lysyl-[lipoyl-carrier protein] + L-lysyl-[glycine-cleavage complex H protein]. It functions in the pathway protein modification; protein lipoylation via endogenous pathway; protein N(6)-(lipoyl)lysine from octanoyl-[acyl-carrier-protein]. Catalyzes the amidotransfer (transamidation) of the octanoyl moiety from octanoyl-GcvH to the lipoyl domain of the E2 subunit of lipoate-dependent enzymes. This Oceanobacillus iheyensis (strain DSM 14371 / CIP 107618 / JCM 11309 / KCTC 3954 / HTE831) protein is Octanoyl-[GcvH]:protein N-octanoyltransferase.